The sequence spans 341 residues: Eukaryotic translation initiation factor 2 subunit 1 (341 aa).

Residues 16 to 87 form the S1 motif domain; sequence EDVVMVNVLS…EKGYIDLSKR (72 aa). Ser51 carries the phosphoserine modification. The interval 293–341 is disordered; the sequence is AENAQVAGDDDEEDGADQEGMQFDPEKEFNHKGSGAGRANEEDEEEEED. The span at 300–309 shows a compositional bias: acidic residues; sequence GDDDEEDGAD.

This sequence belongs to the eIF-2-alpha family. In terms of assembly, eukaryotic translation initiation factor 2 eIF2 is a heterotrimeric complex composed of an alpha, a beta and a gamma subunit. Post-translationally, phosphorylation of eIF-2-alpha impairs the recycling of eIF-2 between successive rounds of initiation and thus leads to inhibition of translation.

It localises to the cytoplasm. The protein localises to the cytosol. Its function is as follows. eIF-2 functions in the early steps of protein synthesis by forming a ternary complex with GTP and initiator tRNA. This pre-initiation complex mediates ribosomal recognition of a start codon during the scanning process of the leader region. The sequence is that of Eukaryotic translation initiation factor 2 subunit 1 from Drosophila melanogaster (Fruit fly).